The chain runs to 492 residues: N-succinylglutamate 5-semialdehyde dehydrogenase (492 aa).

220–225 (GSANTG) is a binding site for NAD(+). Catalysis depends on residues Glu243 and Cys277.

The protein belongs to the aldehyde dehydrogenase family. AstD subfamily.

The enzyme catalyses N-succinyl-L-glutamate 5-semialdehyde + NAD(+) + H2O = N-succinyl-L-glutamate + NADH + 2 H(+). It participates in amino-acid degradation; L-arginine degradation via AST pathway; L-glutamate and succinate from L-arginine: step 4/5. Catalyzes the NAD-dependent reduction of succinylglutamate semialdehyde into succinylglutamate. In Shigella flexneri, this protein is N-succinylglutamate 5-semialdehyde dehydrogenase.